We begin with the raw amino-acid sequence, 620 residues long: Glutathione-regulated potassium-efflux system protein KefC (620 aa).

Helical transmembrane passes span 4 to 24, 26 to 46, 54 to 74, 90 to 110, 114 to 134, 149 to 169, 178 to 198, 218 to 238, 270 to 290, 294 to 314, 327 to 347, and 359 to 379; these read HTLL…PIAV, LGLG…PWGL, SILH…GLEL, GALQ…FLGL, VAEL…MQAM, FAVL…IPLL, LGAF…VVLL, VFSA…EEVG, GLLL…GTLV, LRIL…LWLV, WFAV…GAAQ, and ALTL…MLLT. The RCK N-terminal domain maps to 399–518; sequence QPRVIVAGFG…AGVAMPERET (120 aa). The interval 599 to 620 is disordered; sequence QGTAEGKHSGEAADEPEVKPSI.

It belongs to the monovalent cation:proton antiporter 2 (CPA2) transporter (TC 2.A.37) family. KefC subfamily. In terms of assembly, homodimer. Interacts with the regulatory subunit KefF.

It localises to the cell inner membrane. Functionally, pore-forming subunit of a potassium efflux system that confers protection against electrophiles. Catalyzes K(+)/H(+) antiport. In Salmonella heidelberg (strain SL476), this protein is Glutathione-regulated potassium-efflux system protein KefC.